Consider the following 637-residue polypeptide: Probable polypeptide N-acetylgalactosaminyltransferase 8 (637 aa).

The Cytoplasmic segment spans residues 1 to 6 (MMFWRK). Residues 7 to 29 (LPKALFIGLTLAIAVNLLLVFSS) traverse the membrane as a helical; Signal-anchor for type II membrane protein segment. Over 30-637 (KGTLQNLFTG…VRDWGQTNSQ (608 aa)) the chain is Lumenal. N-linked (GlcNAc...) asparagine glycans are attached at residues N85, N107, and N160. 5 disulfide bridges follow: C171–C404, C395–C474, C509–C525, C556–C571, and C599–C617. A catalytic subdomain A region spans residues 180–294 (LPSLSVILIF…VGWAEPILAR (115 aa)). Substrate contacts are provided by D221 and R255. Mn(2+) contacts are provided by D278, H280, and H409. The catalytic subdomain B stretch occupies residues 351 to 412 (PVKSPSIMGI…PCSRIAHLER (62 aa)). R412 and Y417 together coordinate substrate. A Ricin B-type lectin domain is found at 496–634 (GYGRMKNLLD…QHTVRDWGQT (139 aa)).

The protein belongs to the glycosyltransferase 2 family. GalNAc-T subfamily. It depends on Mn(2+) as a cofactor. As to expression, widely expressed. Expressed in heart, skeletal muscle, kidney, liver, small intestine and placenta. Weakly expressed in colon, thymus, spleen, lung and leukocyte.

The protein localises to the golgi apparatus membrane. The catalysed reaction is L-seryl-[protein] + UDP-N-acetyl-alpha-D-galactosamine = a 3-O-[N-acetyl-alpha-D-galactosaminyl]-L-seryl-[protein] + UDP + H(+). It catalyses the reaction L-threonyl-[protein] + UDP-N-acetyl-alpha-D-galactosamine = a 3-O-[N-acetyl-alpha-D-galactosaminyl]-L-threonyl-[protein] + UDP + H(+). Its pathway is protein modification; protein glycosylation. Its function is as follows. Probably catalyzes the initial reaction in O-linked oligosaccharide biosynthesis, the transfer of an N-acetyl-D-galactosamine residue to a serine or threonine residue on the protein receptor. The chain is Probable polypeptide N-acetylgalactosaminyltransferase 8 (GALNT8) from Homo sapiens (Human).